A 209-amino-acid chain; its full sequence is uncharacterized protein (209 aa).

Residues 1-17 form the signal peptide; it reads MKKLVTGLLALSLFLAA. The segment at 17 to 106 is disordered; sequence ACGQDSDQQK…SGQTTNNQKS (90 aa). Cysteine 18 is lipidated: N-palmitoyl cysteine. A lipid anchor (S-diacylglycerol cysteine) is attached at cysteine 18. The span at 23-70 shows a compositional bias: basic and acidic residues; the sequence is DQQKDSNKEKDDKAKTEQQDKKTNDSSKDKKDNKDDSKDVNKDNKDNS. Positions 71–106 are enriched in low complexity; sequence ANDNQQQSNSNATNNDQNQTNNNQSNSGQTTNNQKS.

The protein resides in the cell membrane. This is an uncharacterized protein from Staphylococcus aureus (strain MRSA252).